The chain runs to 155 residues: Regulatory protein RecX (155 aa).

It belongs to the RecX family.

It localises to the cytoplasm. Modulates RecA activity. The polypeptide is Regulatory protein RecX (Vibrio campbellii (strain ATCC BAA-1116)).